The sequence spans 252 residues: MNKVVVKNVTFGEGAPKICVPMVGKTVAALKEEAEMLQTIDLDVVEWRVDFFEDVKDLAKVEAALDEIRTILPETPILFTFRSAKEGGELAVSDEFYFELNETLAGTGKIDLVDVELFNEEADVLRLIETAHKNNVKVVMSNHDFDKTPAKEEIVSRLTRMEALGADLPKIAVMPKSAGDVLTLLDATNTVSEKANQPIITMSMAGTGVISRLAGEVFGSAMTFGAAKKASAPGQIDVNELRHVLDLLHKQF.

Residues 46–48 (EWR) and Arg-82 each bind 3-dehydroquinate. The active-site Proton donor/acceptor is the His-143. The Schiff-base intermediate with substrate role is filled by Lys-170. Positions 212, 231, and 235 each coordinate 3-dehydroquinate.

The protein belongs to the type-I 3-dehydroquinase family. Homodimer.

It catalyses the reaction 3-dehydroquinate = 3-dehydroshikimate + H2O. It functions in the pathway metabolic intermediate biosynthesis; chorismate biosynthesis; chorismate from D-erythrose 4-phosphate and phosphoenolpyruvate: step 3/7. In terms of biological role, involved in the third step of the chorismate pathway, which leads to the biosynthesis of aromatic amino acids. Catalyzes the cis-dehydration of 3-dehydroquinate (DHQ) and introduces the first double bond of the aromatic ring to yield 3-dehydroshikimate. The chain is 3-dehydroquinate dehydratase from Listeria monocytogenes serotype 4b (strain CLIP80459).